Here is a 489-residue protein sequence, read N- to C-terminus: MTFRHCVAVDLGASSGRVMLARYDSKHRTLTLREIHRFVNCLQKTDGFDTWDIDSLEKDIRLGLKKVCNEGILIDSIGIDTWGVDYVLLDKQGQRVGLPVSYRDNRTTGIMSQALVQIGKSEIYRRSGIQFLPFNTIYQLRALTKQQPELTAQVAHALLMPDYFSYRLTGEMNWEYTNATTTQLVNINTDDWDDTLLAWTGAKKGWFGRPSHPGNVIGDWICPQGNRIPVVAVASHDTASAVIASPLANKHSAYLSSGTWSLMGFESKMPYTTDEALAANITNEGGAEGRYRVLKNIMGLWLLQRVLKERRITDLPALIAQTEALPACRFLINPNDDRFINPDDMRAEIQAACRETDQPVPVSDAELARCIFDSLALLYADILHELANLRGEKFTQLHIVGGGCQNALLNQLCADACGIRVMAGPVEASTLGNIGIQLMTLDELNNVDDFRQVVSANYDLTTYIPNPDSEIARHVAQFQPKRQTKELCA.

13 to 17 (ASSGR) is an ATP binding site. Cysteines 68 and 222 form a disulfide. Substrate is bound by residues glycine 83 and 236–238 (HDT). The Proton acceptor role is filled by aspartate 237. Threonine 259 is an ATP binding site. Residue asparagine 296 participates in substrate binding. Glutamine 304 provides a ligand contact to ATP. Cysteine 353 and cysteine 370 form a disulfide bridge. Residue glycine 402 coordinates ATP. A disulfide bridge connects residues cysteine 413 and cysteine 417.

The protein belongs to the rhamnulokinase family. Mg(2+) is required as a cofactor.

The catalysed reaction is L-rhamnulose + ATP = L-rhamnulose 1-phosphate + ADP + H(+). Its pathway is carbohydrate degradation; L-rhamnose degradation; glycerone phosphate from L-rhamnose: step 2/3. Its function is as follows. Involved in the catabolism of L-rhamnose (6-deoxy-L-mannose). Catalyzes the transfer of the gamma-phosphate group from ATP to the 1-hydroxyl group of L-rhamnulose to yield L-rhamnulose 1-phosphate. In Salmonella schwarzengrund (strain CVM19633), this protein is Rhamnulokinase.